A 1365-amino-acid chain; its full sequence is TMEHYLKTYLSWLTEEQKEKLKEMKEAGKTKAEIQHEVMHYYDQLHGEEKQQATEKLKVGCKMLLKGIIGEEKVVELRNMKEAGADIQELQQKVEKMLSEVTDEKQKEKVHEYGPACKKIFGATTLQHHRRRRHHFTLESSLDTHLKWLSQEQKDELLKMKKDGKTKKELEAKILHYYDELEGDAKKEATEHLKGGCGEILKHVVGEEKAAELKNLKDSGASKEELKAKVEEALHAVTDEEKKQYIADFGPACKKIYGVHTSRRRRHHFTLESSLDTHLKWLSQEQKDELLKMKKDGKAKKELEAKILHYYDELEGDAKKEATEHLKGGCAEILKHVVGEEKAAELKNLKDSGASKEELKAKVEEALHAVTDEEKKQYIADFGPACKKIYGVHTSRRRRHHFTLESSLDTHLKWLSQEQKDELLKMKKDGKTKKDLQAKILHYYDELEGDAKKEATEHLKDGCREILKHVVGEEKEAELKKLKDSGASKEEVKAKVEEALHAVTDEEKKQYIADFGPACKKIFGAAHTSRRRRHHFTLESSLDTHLKWLSQEQKDELLKMKKDGKAKKELEAKILHYYDELEGDAKKEATEHLKGGCREILKHVVGEEKAAELKNLKDSGASKEELKAKVEEALHAVTDEEKKQYIADFGPACKKIYGVHTSRRRRHHFTLESSLDTHLKWLSQEQKDELLKMKKDGKAKKELEAKILHYYDELEGDAKKEATEHLKGGCREILKHVVGEEKAAELKNLKDSGASKEELKAKVEEALHAVTDEEKKQYIADFGPACKKIYGVHTSRRRRHHFTLESSLDTHLKWLSQEQKDELLKMKKDGKAKKELEAKILHYYDELEGDAKKEATEHLKGGCREILKHVVGEEKAAELKNLKDSGASKEELKAKVEEALHAVTDEEKKQYIADFGPACKKIYGVHTSRRRRHHFTLESSLDTHLKWLSQEQKDELLKMKKDGKAKKELEAKILHYYDELEGDAKKEATEHLKGGCREILKHVVGEEKAAELKNLKDSGASKEELKAKVEEALHAVTDEEKKQYIADFGPACKKIYGVHTSRRRRHHFTLESSLDTHLKWLSQEQKDELLKMKKDGKAKKELEAKILHYYDELEGDAKKEATEHLKGGCREILKHVVGEEKAAELKNLKDSGASKEELKAKVEEALHAVTDEEKKQYIADFGPACKKIYGVHTSRRRRHHFTLESSLDTHLKWLSQEQKDELLKMKKDGKAKKELEAKILHYYDELEGDAKKEATEHLKGGCREILKHVVGEEKAAELKNLKDSGASKEELKAKVEEALHAVTDEEKKQYIADFGPACKKIYGVHTSRRRRYHAEDGTDDIDGLAQSRQRRSGFFEKLIDVFAFF.

This sequence belongs to the NPA family. Post-translationally, nematode polyprotein allergens (NPAs) are synthesized as large polypeptides that are subsequently proteolytically cleaved to active polypeptide units. In terms of tissue distribution, pseudocoelomic fluid.

Its function is as follows. Has high binding affinity for fatty acids and retinoids. This Ascaris suum (Pig roundworm) protein is Polyprotein ABA-1 (ABA-1).